Consider the following 376-residue polypeptide: C-type lectin domain family 4 member M (376 aa).

Topologically, residues 1-49 are cytoplasmic; it reads MSDSKEPRVQQLGLLEEDPTTSGIRLFPRDFQFQQIHGHKSSTGCLGHG. Positions 14–15 match the Endocytosis signal motif; the sequence is LL. Residues 50–70 form a helical; Signal-anchor for type II membrane protein membrane-spanning segment; the sequence is ALVLQLLSFTLLAGVLVAILV. Over 71-376 the chain is Extracellular; the sequence is QVSKVPSSLS…KKPTVCFRDE (306 aa). An N-linked (GlcNAc...) asparagine glycan is attached at N92. 6 tandem repeats follow at residues 108 to 130, 131 to 153, 154 to 176, 177 to 199, 200 to 222, and 223 to 245. A 6 X approximate tandem repeats region spans residues 108 to 246; it reads KLQEIYQELT…AFERLCRHCP (139 aa). 4 cysteine pairs are disulfide-bonded: C242/C372, C245/C256, C273/C366, and C345/C358. The 117-residue stretch at 251 to 367 folds into the C-type lectin domain; sequence FFQGNCYFMS…CDVDNYWICK (117 aa). Residues E336, N338, S340, E343, N354, and D355 each coordinate Ca(2+). N338 is a glycosylation site (N-linked (GlcNAc...) asparagine).

In terms of assembly, homotetramer.

The protein resides in the membrane. Functionally, probable pathogen-recognition receptor involved in peripheral immune surveillance in liver. May mediate the endocytosis of pathogens which are subsequently degraded in lysosomal compartments. Probably recognizes in a calcium-dependent manner high mannose N-linked oligosaccharides in a variety of pathogen antigens. Is a receptor for ICAM3, probably by binding to mannose-like carbohydrates. The polypeptide is C-type lectin domain family 4 member M (CLEC4M) (Gorilla gorilla gorilla (Western lowland gorilla)).